We begin with the raw amino-acid sequence, 226 residues long: MTRKIIAVIPASGVGSRMQAGLPKQYLKLQNKTILEHTLEIFLAHPDIEKIVVAVAETDPFYPQVALLDSPKIQIVFGGETRAHSVFNALQVIEDDSWVLVHDAARPCLKRSDLDKLLQSDAKHGAILATPAIDTMKRADGDKIMHTEDRSTLWHALTPQFFPTHLLKQALISAFEKNLTVTDEASAMEFSGYQPRLIAGRSDNLKITRPEDLALAEFYLTQNTEK.

It belongs to the IspD/TarI cytidylyltransferase family. IspD subfamily.

The catalysed reaction is 2-C-methyl-D-erythritol 4-phosphate + CTP + H(+) = 4-CDP-2-C-methyl-D-erythritol + diphosphate. It participates in isoprenoid biosynthesis; isopentenyl diphosphate biosynthesis via DXP pathway; isopentenyl diphosphate from 1-deoxy-D-xylulose 5-phosphate: step 2/6. Functionally, catalyzes the formation of 4-diphosphocytidyl-2-C-methyl-D-erythritol from CTP and 2-C-methyl-D-erythritol 4-phosphate (MEP). The sequence is that of 2-C-methyl-D-erythritol 4-phosphate cytidylyltransferase from Actinobacillus pleuropneumoniae serotype 7 (strain AP76).